We begin with the raw amino-acid sequence, 475 residues long: ESX-3 secretion system protein EccD3 (475 aa).

The next 11 helical transmembrane spans lie at I132 to V152, L161 to V181, A186 to L206, F212 to M232, I241 to A261, W264 to V284, G333 to A353, N354 to A374, A384 to G404, A409 to L429, and G453 to L473.

Belongs to the EccD/Snm4 family. Part of the ESX-3 / type VII secretion system (T7SS), which is composed of cytosolic and membrane components. The ESX-3 membrane complex is composed of EccB3, EccC3, EccD3 and EccE3.

It localises to the cell inner membrane. Functionally, part of the ESX-3 specialized secretion system, which is required for siderophore-mediated iron acquisition and for the secretion of EsxH and EsxG. The protein is ESX-3 secretion system protein EccD3 of Mycolicibacterium smegmatis (strain ATCC 700084 / mc(2)155) (Mycobacterium smegmatis).